The sequence spans 663 residues: MKDLFKIYSNYQPAGDQPTAIASLIDGLESGLAKQTLLGVTGSGKTFTIAHVIQAMKRPTLIMAPNKTLAAQLYGEFKAFFPDNAVEYFVSYYDYYQPEAYVPASDTFIEKDASINEHIEQMRLSATKALIERKDAIIVATVSAIYGLGDPDSYLRMLLHLSRGEQSDQRKILKRLAEMQYTRTNLSLERGQFRVNGDVIDIFPADSEKEAIRIELFDDEVDNIARFDPLTGEILQRLPRVTIFPKTHYVTPRERILETVEKVKVELQERLAELNAQNKLVEAQRLEQRTCFDIEMMLELGYCSGIENYSRYLSNREAGEAPPTLFDYLPPEALLIIDESHVTVPQIGGMYRGDRARKETLVNYGFRLPSALDNRPLRFEEFEERSPQTIYISATPGPYEQEHSDNVAEQVVRPTGLIDPEVEIRPVKTQVDDLMSEIRQVIAQGSRILVTTLTKRMAEDLTEYLSEHGIKVRYLHSDVDTVERMEIIRDLRLGEFDVLVGINLLREGLDMPEVALVAILDADKEGFLRSERSLIQTIGRAARNVKGRAILYADNITGSMQRALTETERRREKQKAFNLKHGITPKGINKSVEDILEGAYIGKRKTMVAEQAPRYTHWSPQELAKQINALEKQMYAHAQNMEFELAAKIRDEYLLLKEQLMKI.

A Helicase ATP-binding domain is found at 26–414; that stretch reads DGLESGLAKQ…DNVAEQVVRP (389 aa). 39–46 lines the ATP pocket; it reads GVTGSGKT. The Beta-hairpin signature appears at 92–115; it reads YYDYYQPEAYVPASDTFIEKDASI. A Helicase C-terminal domain is found at 430–596; it reads QVDDLMSEIR…GINKSVEDIL (167 aa). The region spanning 624–659 is the UVR domain; sequence AKQINALEKQMYAHAQNMEFELAAKIRDEYLLLKEQ.

Belongs to the UvrB family. Forms a heterotetramer with UvrA during the search for lesions. Interacts with UvrC in an incision complex.

Its subcellular location is the cytoplasm. Functionally, the UvrABC repair system catalyzes the recognition and processing of DNA lesions. A damage recognition complex composed of 2 UvrA and 2 UvrB subunits scans DNA for abnormalities. Upon binding of the UvrA(2)B(2) complex to a putative damaged site, the DNA wraps around one UvrB monomer. DNA wrap is dependent on ATP binding by UvrB and probably causes local melting of the DNA helix, facilitating insertion of UvrB beta-hairpin between the DNA strands. Then UvrB probes one DNA strand for the presence of a lesion. If a lesion is found the UvrA subunits dissociate and the UvrB-DNA preincision complex is formed. This complex is subsequently bound by UvrC and the second UvrB is released. If no lesion is found, the DNA wraps around the other UvrB subunit that will check the other stand for damage. This is UvrABC system protein B from Legionella pneumophila (strain Lens).